A 362-amino-acid chain; its full sequence is Uracil-DNA glycosylase (362 aa).

The tract at residues 28-97 is disordered; it reads ASVAPNDPTE…AGPTEDPNFA (70 aa). Residue D205 is the Proton acceptor of the active site.

The protein belongs to the uracil-DNA glycosylase (UDG) superfamily. UNG family.

It is found in the host nucleus. It carries out the reaction Hydrolyzes single-stranded DNA or mismatched double-stranded DNA and polynucleotides, releasing free uracil.. Functionally, excises uracil residues from the DNA which can arise as a result of misincorporation of dUMP residues by DNA polymerase or deamination of cytosines. Therefore may reduce deleterious uracil incorporation into the viral genome, particularly in terminally differentiated cells which lack DNA repair enzymes. The polypeptide is Uracil-DNA glycosylase (UL2) (Psittacid herpesvirus 1 (isolate Amazon parrot/-/97-0001/1997) (PsHV-1)).